Here is a 146-residue protein sequence, read N- to C-terminus: MORN repeat-containing protein 4 (146 aa).

MORN repeat units follow at residues 16–38 (YRGEWKEGRRHGFGQLVFADGGT), 39–61 (YLGHFENGLFNGFGVLTFSDGSR), 62–84 (YEGEFSQGKFNGVGVFIRYDNMT), and 85–107 (FEGEFKNGRVDGFGLLTFPDGSH).

In terms of assembly, interacts with MYO3A.

Its subcellular location is the cytoplasm. The protein resides in the cell projection. It localises to the filopodium tip. The protein localises to the stereocilium. In terms of biological role, plays a role in promoting axonal degeneration following neuronal injury by toxic insult or trauma. This is MORN repeat-containing protein 4 (Morn4) from Mus musculus (Mouse).